An 829-amino-acid polypeptide reads, in one-letter code: Probable beta-glucosidase H (829 aa).

An N-linked (GlcNAc...) asparagine glycan is attached at N13. D225 is a catalytic residue. N-linked (GlcNAc...) asparagine glycosylation is found at N304, N473, N602, N627, and N664. Residues 389 to 548 (RMLSNAVIHF…DPEQMVANAV (160 aa)) form the PA14 domain.

Belongs to the glycosyl hydrolase 3 family.

Its subcellular location is the secreted. The catalysed reaction is Hydrolysis of terminal, non-reducing beta-D-glucosyl residues with release of beta-D-glucose.. Its pathway is glycan metabolism; cellulose degradation. Its function is as follows. Beta-glucosidases are one of a number of cellulolytic enzymes involved in the degradation of cellulosic biomass. Catalyzes the last step releasing glucose from the inhibitory cellobiose. The sequence is that of Probable beta-glucosidase H (bglH) from Aspergillus fumigatus (strain ATCC MYA-4609 / CBS 101355 / FGSC A1100 / Af293) (Neosartorya fumigata).